A 322-amino-acid chain; its full sequence is Lactamase-like protein nscB (322 aa).

4 residues coordinate Zn(2+): His-97, His-99, Asp-101, and His-102. Asp-101 (proton donor/acceptor) is an active-site residue.

The protein belongs to the metallo-beta-lactamase superfamily. The cofactor is Zn(2+).

It participates in secondary metabolite biosynthesis. Lactamase-like protein; part of the gene cluster that mediates the biosynthesis of neosartoricin B, a prenylated anthracenone that probably exhibits T-cell antiproliferative activity, suggestive of a physiological role as an immunosuppressive agent. The non-reducing polyketide synthase nscA probably synthesizes and cyclizes the decaketide backbone. The hydrolase nscB then mediates the product release through hydrolysis followed by spontaneous decarboxylation. The prenyltransferase nscD catalyzes the addition of the dimethylallyl group to the aromatic C5. The FAD-dependent monooxygenase nscC is then responsible for the stereospecific hydroxylation at C2. Neosartoricin B can be converted into two additional compounds neosartoricins C and D. Neosartoricin C is a spirocyclic compound that is cyclized through the attack of C3 hydroxyl on C14, followed by dehydration. On the other hand, neosartoricin D is a further cyclized compound in which attack of C2 on C14 in neosartoricin C results in the formation of the acetal-containing dioxabicyclo-octanone ring. Both of these compounds are novel and possibly represent related metabolites of the gene cluster. This is Lactamase-like protein nscB from Trichophyton rubrum (strain ATCC MYA-4607 / CBS 118892) (Athlete's foot fungus).